A 323-amino-acid chain; its full sequence is Serine/threonine-protein phosphatase PP1 (323 aa).

Positions 63, 65, 91, and 123 each coordinate Mn(2+). Histidine 124 functions as the Proton donor in the catalytic mechanism. Mn(2+) contacts are provided by histidine 172 and histidine 247.

This sequence belongs to the PPP phosphatase family. PP-1 subfamily. Mn(2+) is required as a cofactor.

The catalysed reaction is O-phospho-L-seryl-[protein] + H2O = L-seryl-[protein] + phosphate. It carries out the reaction O-phospho-L-threonyl-[protein] + H2O = L-threonyl-[protein] + phosphate. Its function is as follows. Plays an important role in the control of mitosis by reversing the action of the nimA kinase. This chain is Serine/threonine-protein phosphatase PP1 (bimG), found in Emericella nidulans (strain FGSC A4 / ATCC 38163 / CBS 112.46 / NRRL 194 / M139) (Aspergillus nidulans).